A 121-amino-acid polypeptide reads, in one-letter code: Large ribosomal subunit protein bL12 (121 aa).

The protein belongs to the bacterial ribosomal protein bL12 family. As to quaternary structure, homodimer. Part of the ribosomal stalk of the 50S ribosomal subunit. Forms a multimeric L10(L12)X complex, where L10 forms an elongated spine to which 2 to 4 L12 dimers bind in a sequential fashion. Binds GTP-bound translation factors.

Its function is as follows. Forms part of the ribosomal stalk which helps the ribosome interact with GTP-bound translation factors. Is thus essential for accurate translation. This is Large ribosomal subunit protein bL12 from Aeromonas hydrophila subsp. hydrophila (strain ATCC 7966 / DSM 30187 / BCRC 13018 / CCUG 14551 / JCM 1027 / KCTC 2358 / NCIMB 9240 / NCTC 8049).